Reading from the N-terminus, the 451-residue chain is UBP1-associated protein 2B (451 aa).

A disordered region spans residues 1-86 (MTKKRKLESE…GNEDDDEEEP (86 aa)). 2 stretches are compositionally biased toward basic and acidic residues: residues 25–38 (CEKEDPEIRNVDNQ) and 49–63 (DTLKEMHEEEAKGED). Residues 67-77 (AETSSGSGNQG) show a composition bias toward polar residues. RRM domains lie at 128 to 236 (RKIF…NVSA) and 227 to 314 (RKIY…QHQH). 2 disordered regions span residues 302-335 (ANDGPKQVKQHQHNHNSHNQNSRYQRNDNNGYGA) and 423-451 (GGYQTQQPGQGGAGRGQHGAGYGGPYMGR). Gly residues predominate over residues 431-451 (GQGGAGRGQHGAGYGGPYMGR).

Expressed in shoot meristem and flowers.

It is found in the nucleus. Heterogeneous nuclear ribonucleoprotein (hnRNP)-like protein that acts as a component of a complex regulating the turnover of mRNAs in the nucleus. Binds with high affinity to RNA molecules that contain U-rich sequences in 3'-UTRs. May function in complex with UBP1 and contribute to the stabilization of mRNAs in the nucleus. The protein is UBP1-associated protein 2B (UBA2B) of Arabidopsis thaliana (Mouse-ear cress).